The chain runs to 488 residues: Receptor-like tyrosine-protein kinase kin-15 (488 aa).

Residues 1 to 26 form the signal peptide; that stretch reads MCLKMRYERIKYILLFSLMHLVYSNS. A glycan (N-linked (GlcNAc...) asparagine) is linked at Asn25. At 27–50 the chain is on the extracellular side; the sequence is TFESFTENPHISSQISNVLYMDQM. A helical membrane pass occupies residues 51 to 70; it reads FIIYILICILLILISVIVYL. At 71-488 the chain is on the cytoplasmic side; the sequence is SKRYSQQMMQ…SKLEDWIRRD (418 aa). Residues 144–458 enclose the Protein kinase domain; the sequence is EISEDKLGSG…VEFFEEHLSV (315 aa). ATP-binding positions include 150–158 and Lys183; that span reads LGSGFFGEV. Asp319 serves as the catalytic Proton acceptor.

The protein belongs to the protein kinase superfamily. Tyr protein kinase family. Hypodermal cells.

The protein resides in the cell membrane. The catalysed reaction is L-tyrosyl-[protein] + ATP = O-phospho-L-tyrosyl-[protein] + ADP + H(+). Its function is as follows. May be specifically involved in cell-cell interactions regulating cell fusions that generate the hypodermis during postembryonic development. It has a role in the development of the HYP7 hypodermal syncytium. This Caenorhabditis elegans protein is Receptor-like tyrosine-protein kinase kin-15 (kin-15).